We begin with the raw amino-acid sequence, 446 residues long: Phosphoglucosamine mutase (446 aa).

Residue Ser100 is the Phosphoserine intermediate of the active site. Ser100, Asp241, Asp243, and Asp245 together coordinate Mg(2+). The residue at position 100 (Ser100) is a Phosphoserine.

Belongs to the phosphohexose mutase family. Mg(2+) serves as cofactor. In terms of processing, activated by phosphorylation.

The catalysed reaction is alpha-D-glucosamine 1-phosphate = D-glucosamine 6-phosphate. In terms of biological role, catalyzes the conversion of glucosamine-6-phosphate to glucosamine-1-phosphate. This chain is Phosphoglucosamine mutase, found in Methylobacterium nodulans (strain LMG 21967 / CNCM I-2342 / ORS 2060).